A 295-amino-acid chain; its full sequence is Energy-coupling factor transporter ATP-binding protein EcfA2 (295 aa).

An ABC transporter domain is found at 3-246 (ITFKQVDFTY…PAWLTAHQLG (244 aa)). An ATP-binding site is contributed by 40 to 47 (GHTGSGKS).

It belongs to the ABC transporter superfamily. Energy-coupling factor EcfA family. In terms of assembly, forms a stable energy-coupling factor (ECF) transporter complex composed of 2 membrane-embedded substrate-binding proteins (S component), 2 ATP-binding proteins (A component) and 2 transmembrane proteins (T component).

Its subcellular location is the cell membrane. In terms of biological role, ATP-binding (A) component of a common energy-coupling factor (ECF) ABC-transporter complex. Unlike classic ABC transporters this ECF transporter provides the energy necessary to transport a number of different substrates. This chain is Energy-coupling factor transporter ATP-binding protein EcfA2, found in Lactiplantibacillus plantarum (strain ATCC BAA-793 / NCIMB 8826 / WCFS1) (Lactobacillus plantarum).